The following is a 610-amino-acid chain: E3 ubiquitin-protein ligase hrd-1 (610 aa).

The N-terminal stretch at 1 to 23 is a signal peptide; that stretch reads MRVSAGLMIGGSCVATAATILNA. Topologically, residues 24 to 41 are lumenal; the sequence is FLINKQFYPSIVYLSKSN. Residues 42 to 62 form a helical membrane-spanning segment; the sequence is ASMAVIYVQGIVLVYLMFQLL. Over 63–99 the chain is Cytoplasmic; sequence KSILFGDLRAAEAEHLSERTWHAVLETCLAFTVFRDD. Residues 100-120 traverse the membrane as a helical segment; the sequence is FSAIFVMQFIGLLFIKCFHWL. Residues 121–144 lie on the Lumenal side of the membrane; the sequence is ADDRVDMMERSPVITLRFHLRMMT. Residues 145–165 form a helical membrane-spanning segment; it reads VLAALGFADSYFVSSAYFTTI. At 166–170 the chain is on the cytoplasmic side; the sequence is TRGAS. A helical transmembrane segment spans residues 171-191; the sequence is AQIVFGFEYAILLALVLHVTI. The Lumenal segment spans residues 192-215; it reads KYLLHMHDLRNPQSWDNKAVYLLY. The chain crosses the membrane as a helical span at residues 216-236; the sequence is AELFINLIRCLLYGFFAVVML. Over 237-610 the chain is Cytoplasmic; it reads RVHTFPLFSV…ARLLGENANQ (374 aa). The segment at 292–333 adopts an RING-type; atypical zinc-finger fold; that stretch reads CIICREEMTVDASPKRLPCSHVFHAHCLRSWFQRQQTCPTCR. 3 disordered regions span residues 386-408, 452-480, and 521-610; these read QPAGAGGAQPGAAQAGGQPGPFP, VNTTQGTSSETPPVNPSYSQLSTEELRRM, and RPVV…NANQ. The segment covering 452–474 has biased composition (polar residues); the sequence is VNTTQGTSSETPPVNPSYSQLST. Over residues 560 to 589 the composition is skewed to low complexity; sequence TESPSTSSTAPSTSSPVTASSTPTTSSTRT.

The protein belongs to the HRD1 family. As to quaternary structure, homodimer.

It localises to the endoplasmic reticulum membrane. It catalyses the reaction S-ubiquitinyl-[E2 ubiquitin-conjugating enzyme]-L-cysteine + [acceptor protein]-L-lysine = [E2 ubiquitin-conjugating enzyme]-L-cysteine + N(6)-ubiquitinyl-[acceptor protein]-L-lysine.. It functions in the pathway protein modification; protein ubiquitination. In terms of biological role, acts as an E3 ubiquitin-protein ligase which accepts ubiquitin specifically from endoplasmic reticulum-associated ubc-7 E2 ligase and transfers it to substrates, promoting their degradation. Component of the endoplasmic reticulum quality control (ERQC) system, which is also called the ER-associated degradation (ERAD) system, involved in ubiquitin-dependent degradation of misfolded endoplasmic reticulum proteins. Also promotes the degradation of normal but naturally short-lived proteins. Protects cells from ER stress-induced apoptosis. Thought to play a role together with hsp-3 in developmental growth and function of intestinal cells and to play a role together with hsp-4 in gonad formation. Plays a key role in the degradation of the potassium channel slo-1, perhaps acting directly, in targeting slo-1 to the ER-associated degradation pathway (ERAD), and also indirectly, via activation of the transcription factor skn-1, which mediates proteasomal homeostasis. The chain is E3 ubiquitin-protein ligase hrd-1 (sel-11) from Caenorhabditis elegans.